The following is a 381-amino-acid chain: 40-kDa huntingtin-associated protein (381 aa).

Position 2 is an N-acetylalanine (Ala2). Residues Lys34–Arg36 carry the Nuclear localization signal motif. Residues Gln221–Ser265 are disordered. The segment covering Pro226–Arg242 has biased composition (pro residues).

As to quaternary structure, interacts with HTT (via C-terminus). Interacts with RAB5A. Found in a complex with F8A1/F8A2/F8A3, HTT and RAB5A; mediates the recruitment of HTT by RAB5A onto early endosomes. Produced abundantly in a wide variety of cell types.

It localises to the cytoplasm. The protein localises to the nucleus. It is found in the early endosome. Its subcellular location is the nuclear body. RAB5A effector molecule that is involved in vesicular trafficking of early endosomes. Mediates the recruitment of HTT by RAB5A onto early endosomes. The HTT-F8A1/F8A2/F8A3-RAB5A complex stimulates early endosomal interaction with actin filaments and inhibits interaction with microtubules, leading to the reduction of endosome motility. This chain is 40-kDa huntingtin-associated protein (F8a1), found in Mus musculus (Mouse).